The chain runs to 592 residues: Anaphase-promoting complex subunit 8 (592 aa).

TPR repeat units follow at residues 66–99, 160–193, 291–324, 359–392, 393–426, 428–460, 461–494, and 496–528; these read EYYK…QLPI, QQQQ…NKKD, TYIL…EPNR, PETC…NDRY, LSAW…NPRD, RAWY…RPYD, PRMW…YDRE, and VAIN…CDQE. Residues 129–166 form a disordered region; it reads QQQAQQQAQQAQQESQQNDKNNDTNNNNKTDQQQQQQQ.

Belongs to the APC8/CDC23 family. The APC/C is composed of at least 13 subunits that stay tightly associated throughout the cell cycle: anapc1, anapc2, anapc3, anapc4, anapc5, anapc6, anapc7, anapc8, anapc10, anapc11, cdc20, cdc26 and cdh1.

It localises to the nucleus. It participates in protein modification; protein ubiquitination. Component of the anaphase promoting complex/cyclosome (APC/C), a cell cycle-regulated E3 ubiquitin-protein ligase complex that controls progression through mitosis and the G1 phase of the cell cycle. This is Anaphase-promoting complex subunit 8 (anapc8) from Dictyostelium discoideum (Social amoeba).